We begin with the raw amino-acid sequence, 619 residues long: 1-deoxy-D-xylulose-5-phosphate synthase (619 aa).

Thiamine diphosphate contacts are provided by residues histidine 74 and 115-117 (GHS). Aspartate 146 lines the Mg(2+) pocket. Thiamine diphosphate-binding positions include 147–148 (GA), asparagine 175, and tyrosine 285. Asparagine 175 contributes to the Mg(2+) binding site. The interval 289–310 (EKSPSKYHGIPPSNDKKEEPNK) is disordered. Thiamine diphosphate is bound at residue glutamate 365.

The protein belongs to the transketolase family. DXPS subfamily. As to quaternary structure, homodimer. The cofactor is Mg(2+). Thiamine diphosphate serves as cofactor.

The enzyme catalyses D-glyceraldehyde 3-phosphate + pyruvate + H(+) = 1-deoxy-D-xylulose 5-phosphate + CO2. The protein operates within metabolic intermediate biosynthesis; 1-deoxy-D-xylulose 5-phosphate biosynthesis; 1-deoxy-D-xylulose 5-phosphate from D-glyceraldehyde 3-phosphate and pyruvate: step 1/1. Its function is as follows. Catalyzes the acyloin condensation reaction between C atoms 2 and 3 of pyruvate and glyceraldehyde 3-phosphate to yield 1-deoxy-D-xylulose-5-phosphate (DXP). This chain is 1-deoxy-D-xylulose-5-phosphate synthase, found in Clostridium botulinum (strain Alaska E43 / Type E3).